The primary structure comprises 413 residues: Interferon-inducible GTPase 1 (413 aa).

Gly-2 carries the N-myristoyl glycine lipid modification. An IRG-type G domain is found at Ser-68–Asp-250. Gly-79, Gly-81, Lys-82, Ser-83, Ser-84, Thr-102, and Gly-103 together coordinate GDP. The residue at position 102 (Thr-102) is a (Microbial infection) Phosphothreonine; by ROP18. Thr-108 is subject to (Microbial infection) Phosphothreonine; by ROP18. Positions 184, 186, 187, and 232 each coordinate GDP. Cys-236 and Cys-410 are joined by a disulfide.

This sequence belongs to the TRAFAC class dynamin-like GTPase superfamily. IRG family. In terms of assembly, monomer, as apoenzyme and in the GDP-bound form. Homooligomer, upon GTP binding. Interacts with HOOK3. As to quaternary structure, (Microbial infection) Interacts with Toxoplasma gondii GRA7 in GTP-dependent manner; the interaction results in faster turnover of the GTP-activated IIGP1 oligomer. Interacts with T.gondii ROP5; the interaction results in inhibition of IRGA6/IIGP1 GTPase activity and oligomerization. Myristoylated. Post-translationally, (Microbial infection) Phosphorylated by Toxoplasma gondii ROP18 from virulent strains.

The protein resides in the cytoplasm. The protein localises to the nucleus membrane. It localises to the endoplasmic reticulum membrane. It is found in the golgi apparatus. Its subcellular location is the golgi stack membrane. The protein resides in the parasitophorous vacuole membrane. The catalysed reaction is GTP + H2O = GDP + phosphate + H(+). GTPase with low activity. Has higher affinity for GDP than for GTP. Plays a role in resistance to intracellular pathogens. During infection with avirulent Toxoplasma gondii strains, recruited to the parasitophorous vacuole membrane. Required for disruption of the parasitophorous vacuole formed following T.gondii infection and subsequent killing of the parasite. Mediates resistance to Chlamydia trachomatis infection by targeting bacterial inclusions to autophagosomes for subsequent lysosomal destruction. This chain is Interferon-inducible GTPase 1 (Iigp1), found in Mus musculus (Mouse).